Consider the following 448-residue polypeptide: uncharacterized protein (448 aa).

A helical membrane pass occupies residues 19 to 41; sequence LGLLVPFLLLLFSCTNTVGYGVL. The SH3b domain maps to 105–181; the sequence is YSYATSVLDG…CFSHGLSLFD (77 aa).

The protein localises to the membrane. This is an uncharacterized protein from Treponema pallidum (strain Nichols).